Here is a 453-residue protein sequence, read N- to C-terminus: Probable exopolygalacturonase B (453 aa).

The first 16 residues, 1–16, serve as a signal peptide directing secretion; it reads MKFFALAALFASTVNS. 2 N-linked (GlcNAc...) asparagine glycosylation sites follow: N185 and N225. D255 functions as the Proton donor in the catalytic mechanism. A disulfide bridge links C257 with C274. N-linked (GlcNAc...) asparagine glycans are attached at residues N263 and N275. The active site involves H278. 2 PbH1 repeats span residues 295-316 and 327-348; these read IENVWIENVTLLNGENGARLKA and INNVTYKNIHVENTDNPIVLDQ. Residues N302, N329, N354, and N366 are each glycosylated (N-linked (GlcNAc...) asparagine). The stretch at 362-405 is one PbH1 3 repeat; sequence PSRVNFTNIVFEDIYGTSSGKRGKVVADLTCSPNAVCSGIRLKN. C392 and C398 are disulfide-bonded. A glycan (N-linked (GlcNAc...) asparagine) is linked at N436.

Belongs to the glycosyl hydrolase 28 family.

It is found in the secreted. The catalysed reaction is [(1-&gt;4)-alpha-D-galacturonosyl](n) + H2O = alpha-D-galacturonate + [(1-&gt;4)-alpha-D-galacturonosyl](n-1). Its function is as follows. Specific in hydrolyzing the terminal glycosidic bond of polygalacturonic acid and oligogalacturonates. In Aspergillus fumigatus (strain ATCC MYA-4609 / CBS 101355 / FGSC A1100 / Af293) (Neosartorya fumigata), this protein is Probable exopolygalacturonase B (pgxB).